Consider the following 127-residue polypeptide: Glycine cleavage system H protein (127 aa).

Residues 22–104 form the Lipoyl-binding domain; that stretch reads EVVIGITHFA…YEGAWMVKVE (83 aa). The residue at position 63 (lysine 63) is an N6-lipoyllysine.

The protein belongs to the GcvH family. In terms of assembly, the glycine cleavage system is composed of four proteins: P, T, L and H. The cofactor is (R)-lipoate.

Functionally, the glycine cleavage system catalyzes the degradation of glycine. The H protein shuttles the methylamine group of glycine from the P protein to the T protein. Is also involved in protein lipoylation via its role as an octanoyl/lipoyl carrier protein intermediate. The polypeptide is Glycine cleavage system H protein (Bacillus cereus (strain ATCC 10987 / NRS 248)).